A 385-amino-acid polypeptide reads, in one-letter code: Queuine tRNA-ribosyltransferase (385 aa).

Asp92 (proton acceptor) is an active-site residue. Residues 92–96 (DSGGF), Asp146, Gln188, and Gly215 contribute to the substrate site. The RNA binding stretch occupies residues 246 to 252 (GVGHPED). The active-site Nucleophile is Asp265. The RNA binding; important for wobble base 34 recognition stretch occupies residues 270–274 (TRTGR). 4 residues coordinate Zn(2+): Cys303, Cys305, Cys308, and His334.

The protein belongs to the queuine tRNA-ribosyltransferase family. Homodimer. Within each dimer, one monomer is responsible for RNA recognition and catalysis, while the other monomer binds to the replacement base PreQ1. It depends on Zn(2+) as a cofactor.

The catalysed reaction is 7-aminomethyl-7-carbaguanine + guanosine(34) in tRNA = 7-aminomethyl-7-carbaguanosine(34) in tRNA + guanine. It participates in tRNA modification; tRNA-queuosine biosynthesis. Functionally, catalyzes the base-exchange of a guanine (G) residue with the queuine precursor 7-aminomethyl-7-deazaguanine (PreQ1) at position 34 (anticodon wobble position) in tRNAs with GU(N) anticodons (tRNA-Asp, -Asn, -His and -Tyr). Catalysis occurs through a double-displacement mechanism. The nucleophile active site attacks the C1' of nucleotide 34 to detach the guanine base from the RNA, forming a covalent enzyme-RNA intermediate. The proton acceptor active site deprotonates the incoming PreQ1, allowing a nucleophilic attack on the C1' of the ribose to form the product. After dissociation, two additional enzymatic reactions on the tRNA convert PreQ1 to queuine (Q), resulting in the hypermodified nucleoside queuosine (7-(((4,5-cis-dihydroxy-2-cyclopenten-1-yl)amino)methyl)-7-deazaguanosine). The protein is Queuine tRNA-ribosyltransferase of Thermus thermophilus (strain ATCC BAA-163 / DSM 7039 / HB27).